The following is a 266-amino-acid chain: MFPELNSLLGAGTDTVERGKFTLLCDSKTDGSFLVHHFLSYYLRAGCRVCFVALVQSFSHYSIVAQKLGVNLSSAKDEGQLVFLEGLRSYTDLLFGDNPEAEVTNPLCFLRAGSDLKPLYSFVSAALAPSAGQSWKCPVLILDDVSVLLSLGVPPLQLLDFMHYCRATVCTQYQGNVVCLVHGAEESGDEEKELLRRSLSHQSQVILWAEGLSSGFCKEVHGQLKIFRGAVSSGKKRGQTQPEIYQYKIQDKHVTFFARGLSAAVL.

The protein belongs to the ELP6 family. As to quaternary structure, component of the elongator complex.

It is found in the cytoplasm. It localises to the nucleus. The protein operates within tRNA modification; 5-methoxycarbonylmethyl-2-thiouridine-tRNA biosynthesis. Component of the elongator complex which is required for multiple tRNA modifications, including mcm5U (5-methoxycarbonylmethyl uridine), mcm5s2U (5-methoxycarbonylmethyl-2-thiouridine), and ncm5U (5-carbamoylmethyl uridine). The elongator complex catalyzes formation of carboxymethyluridine in the wobble base at position 34 in tRNAs. In Xenopus tropicalis (Western clawed frog), this protein is Elongator complex protein 6 (elp6).